Consider the following 764-residue polypeptide: Molybdenum cofactor sulfurase 1 (764 aa).

N6-(pyridoxal phosphate)lysine is present on K228. Residue C394 is part of the active site. Positions 607–762 (LRLLKQSDEE…LYCNSVVEGL (156 aa)) constitute an MOSC domain.

Belongs to the class-V pyridoxal-phosphate-dependent aminotransferase family. MOCOS subfamily. Pyridoxal 5'-phosphate is required as a cofactor.

It catalyses the reaction Mo-molybdopterin + L-cysteine + AH2 = thio-Mo-molybdopterin + L-alanine + A + H2O. Functionally, sulfurates the molybdenum cofactor. Sulfation of molybdenum is essential for xanthine dehydrogenase (XDH) and aldehyde oxidase (ADO) enzymes in which molybdenum cofactor is liganded by 1 oxygen and 1 sulfur atom in active form. The sequence is that of Molybdenum cofactor sulfurase 1 from Aedes aegypti (Yellowfever mosquito).